Reading from the N-terminus, the 166-residue chain is Nucleotide-binding protein SUN_0226 (166 aa).

Belongs to the YajQ family.

Functionally, nucleotide-binding protein. The protein is Nucleotide-binding protein SUN_0226 of Sulfurovum sp. (strain NBC37-1).